The following is a 584-amino-acid chain: Endogenous retrovirus group FC1 Env polyprotein (584 aa).

The N-terminal stretch at 1–22 (MARPSPLCLLLLLTLLPPIVPS) is a signal peptide. Residues 23-514 (NSLLTEPPFR…NYGGGWWQSP (492 aa)) lie on the Extracellular side of the membrane. N-linked (GlcNAc...) asparagine glycosylation is found at N69 and N247. The short motif at 251 to 254 (CFLC) is the CXXC element. Residues N272, N276, N308, N313, N322, N334, N342, and N346 are each glycosylated (N-linked (GlcNAc...) asparagine). Positions 388–413 (PLVIGVSLTSSLVASGLGTGAIVHFI) are fusion peptide. Residues 449–465 (MQNRRALDLLTADKGGT) carry the CKS-17 motif. Residues C466 and C473 are joined by a disulfide bond. Positions 466–474 (CMFLGEECC) match the CX6CC motif. A glycan (N-linked (GlcNAc...) asparagine) is linked at N478. Residues 515-540 (LTTWIIPFISPILIICLLLLIAPCVL) form a helical membrane-spanning segment. The Cytoplasmic segment spans residues 541–584 (KFIKNRISEVSRVTVNQMLLHPYSRLPTSEDHYDVALTQQEAAR).

It belongs to the gamma type-C retroviral envelope protein family. HERV class-I F(c)1 env subfamily. The surface (SU) and transmembrane (TM) proteins form a heterodimer. SU and TM are attached by noncovalent interactions or by a labile interchain disulfide bond. In terms of processing, specific enzymatic cleavages in vivo yield the mature SU and TM proteins. The CXXC motif is highly conserved across a broad range of retroviral envelope proteins. It is thought to participate in the formation of a labile disulfide bond possibly with the CX6CC motif present in the transmembrane protein.

Its subcellular location is the virion. The protein resides in the cell membrane. Retroviral envelope proteins mediate receptor recognition and membrane fusion during early infection. Endogenous envelope proteins may have kept, lost or modified their original function during evolution. This endogenous envelope protein has lost its original fusogenic properties. In terms of biological role, SU mediates receptor recognition. Its function is as follows. TM anchors the envelope heterodimer to the viral membrane through one transmembrane domain. The other hydrophobic domain, called fusion peptide, mediates fusion of the viral membrane with the target cell membrane. In Pan troglodytes (Chimpanzee), this protein is Endogenous retrovirus group FC1 Env polyprotein (ERVFC1).